Here is a 130-residue protein sequence, read N- to C-terminus: Large ribosomal subunit protein bL31c (130 aa).

The transit peptide at 1-36 (MVLTLSNQFLAKIPATPKTLTLPKTSSSTLRPQWSC) directs the protein to the chloroplast.

It belongs to the bacterial ribosomal protein bL31 family. Type A subfamily. Component of the chloroplast large ribosomal subunit (LSU). Mature 70S chloroplast ribosomes of higher plants consist of a small (30S) and a large (50S) subunit. The 30S small subunit contains 1 molecule of ribosomal RNA (16S rRNA) and 24 different proteins. The 50S large subunit contains 3 rRNA molecules (23S, 5S and 4.5S rRNA) and 33 different proteins.

The protein localises to the plastid. The protein resides in the chloroplast. Functionally, component of the chloroplast ribosome (chloro-ribosome), a dedicated translation machinery responsible for the synthesis of chloroplast genome-encoded proteins, including proteins of the transcription and translation machinery and components of the photosynthetic apparatus. This Spinacia oleracea (Spinach) protein is Large ribosomal subunit protein bL31c (RPL31).